A 112-amino-acid polypeptide reads, in one-letter code: Cytochrome c type-1 (112 aa).

Heme c contacts are provided by Cys-20, Cys-23, His-24, and Met-85.

Binds 1 heme c group covalently per subunit.

It localises to the mitochondrion intermembrane space. Functionally, electron carrier between complex III (ubiquinol-cytochrome c oxireductase) and complex IV (cytochrome c oxidase). This Ascaris suum (Pig roundworm) protein is Cytochrome c type-1.